The following is a 268-amino-acid chain: Tryptophan synthase alpha chain (268 aa).

Residues E49 and D60 each act as proton acceptor in the active site.

Belongs to the TrpA family. As to quaternary structure, tetramer of two alpha and two beta chains.

The enzyme catalyses (1S,2R)-1-C-(indol-3-yl)glycerol 3-phosphate + L-serine = D-glyceraldehyde 3-phosphate + L-tryptophan + H2O. Its pathway is amino-acid biosynthesis; L-tryptophan biosynthesis; L-tryptophan from chorismate: step 5/5. Functionally, the alpha subunit is responsible for the aldol cleavage of indoleglycerol phosphate to indole and glyceraldehyde 3-phosphate. This is Tryptophan synthase alpha chain from Yersinia pseudotuberculosis serotype O:1b (strain IP 31758).